Consider the following 103-residue polypeptide: Defensin-like protein 268 (103 aa).

The signal sequence occupies residues 1–24 (MARLIFHFVFALILAAYLLSVTDA). 4 disulfide bridges follow: Cys44–Cys103, Cys68–Cys87, Cys74–Cys98, and Cys78–Cys100.

The protein belongs to the DEFL family.

It is found in the secreted. This chain is Defensin-like protein 268, found in Arabidopsis thaliana (Mouse-ear cress).